A 186-amino-acid chain; its full sequence is Ran guanine nucleotide release factor (186 aa).

The interval 27-70 (DLRPVPDNQEVFCHPVTDQSLIVELLELQAHVRGEAAARYHFED) is interaction with RAN.

Belongs to the MOG1 family. As to quaternary structure, monomer. Interacts with RAN, both RAN-GTP and RAN-GDP. Competes with RCC1 for a common binding site on RAN and thereby inhibits RCC1-mediated nucleotide exchange. Forms a complex with RAN-GTP and RANBP1. Interacts with the cytoplasmic loop 2 of SCN5A. As to expression, isoform 1 and isoform 2 are ubiquitously expressed. Detected in heart and brain.

It is found in the nucleus. The protein localises to the cytoplasm. The protein resides in the perinuclear region. Its subcellular location is the cell membrane. Functionally, may regulate the intracellular trafficking of RAN. Promotes guanine nucleotide release from RAN and inhibits binding of new GTP by preventing the binding of the RAN guanine nucleotide exchange factor RCC1. Regulates the levels of GTP-bound RAN in the nucleus, and thereby plays a role in the regulation of RAN-dependent mitotic spindle dynamics. Enhances the expression of SCN5A at the cell membrane in cardiomyocytes. This Homo sapiens (Human) protein is Ran guanine nucleotide release factor (RANGRF).